A 332-amino-acid polypeptide reads, in one-letter code: L-lactate dehydrogenase A chain (332 aa).

N-acetylalanine is present on A2. Position 5 is an N6-acetyllysine; alternate (K5). K5 is modified (N6-succinyllysine; alternate). K14 bears the N6-acetyllysine mark. 29 to 57 provides a ligand contact to NAD(+); that stretch reads GAVGMACAISILMKDLADELALVDVIEDK. K57 is subject to N6-acetyllysine; alternate. K57 participates in a covalent cross-link: Glycyl lysine isopeptide (Lys-Gly) (interchain with G-Cter in SUMO2); alternate. Position 81 is an N6-acetyllysine (K81). R99 provides a ligand contact to NAD(+). Substrate is bound at residue R106. K118 is subject to N6-acetyllysine; alternate. K118 is modified (N6-succinyllysine; alternate). K126 carries the N6-acetyllysine modification. N138 is an NAD(+) binding site. N138 and R169 together coordinate substrate. Catalysis depends on H193, which acts as the Proton acceptor. Residue S213 is modified to Phosphoserine. 2 positions are modified to N6-acetyllysine: K224 and K232. Position 239 is a phosphotyrosine (Y239). K243 carries the N6-acetyllysine modification. T248 serves as a coordination point for substrate. T309 is subject to Phosphothreonine. K318 carries the N6-acetyllysine; alternate modification. K318 is subject to N6-succinyllysine; alternate. T322 carries the phosphothreonine modification.

Belongs to the LDH/MDH superfamily. LDH family. In terms of assembly, homotetramer. Interacts with PTEN upstream reading frame protein MP31. Post-translationally, ISGylated.

It localises to the cytoplasm. The enzyme catalyses (S)-lactate + NAD(+) = pyruvate + NADH + H(+). It functions in the pathway fermentation; pyruvate fermentation to lactate; (S)-lactate from pyruvate: step 1/1. Functionally, interconverts simultaneously and stereospecifically pyruvate and lactate with concomitant interconversion of NADH and NAD(+). The chain is L-lactate dehydrogenase A chain (Ldha) from Rattus norvegicus (Rat).